The primary structure comprises 461 residues: Phytase PHO112 (461 aa).

Intrachain disulfides connect C62-C384, C261-C274, and C404-C412. The 1D-myo-inositol hexakisphosphate site is built by R72, H73, R76, and S79. Catalysis depends on H73, which acts as the Nucleophile. N-linked (GlcNAc...) asparagine glycans are attached at residues N97 and N157. R169 provides a ligand contact to 1D-myo-inositol hexakisphosphate. Residues N229 and N248 are each glycosylated (N-linked (GlcNAc...) asparagine). K293 contacts 1D-myo-inositol hexakisphosphate. N302 and N313 each carry an N-linked (GlcNAc...) asparagine glycan. H334 and D335 together coordinate 1D-myo-inositol hexakisphosphate. 2 N-linked (GlcNAc...) asparagine glycosylation sites follow: N437 and N452.

It belongs to the histidine acid phosphatase family. As to quaternary structure, monomer.

Its subcellular location is the secreted. The enzyme catalyses 1D-myo-inositol hexakisphosphate + H2O = 1D-myo-inositol 1,2,4,5,6-pentakisphosphate + phosphate. It carries out the reaction 1D-myo-inositol 1,2,4,5,6-pentakisphosphate + H2O = 1D-myo-inositol 1,2,5,6-tetrakisphosphate + phosphate. The catalysed reaction is 1D-myo-inositol 1,2,5,6-tetrakisphosphate + H2O = 1D-myo-inositol 1,2,6-trisphosphate + phosphate. It catalyses the reaction 1D-myo-inositol 1,2,6-trisphosphate + H2O = 1D-myo-inositol 1,2-bisphosphate + phosphate. The enzyme catalyses 1D-myo-inositol 1,2-bisphosphate + H2O = 1D-myo-inositol 2-phosphate + phosphate. Functionally, catalyzes the phosphate monoester hydrolysis of phytic acid (myo-inositol hexakisphosphate), which results in the stepwise formation of myo-inositol pentakis-, tetrakis-, tris-, bis-, and monophosphates, as well as the liberation of inorganic phosphate. Myo-inositol 2-monophosphate is the end product. Responsible of about 25% of the phytase activity. The residual phytase activity might be contributed by other cytosolic or cellular enzymes such as acid phosphatase that also degraded the substrate phytate. Is essential for human tissue damage during infection. This chain is Phytase PHO112 (PHO112), found in Candida albicans (strain SC5314 / ATCC MYA-2876) (Yeast).